The primary structure comprises 131 residues: Small ribosomal subunit protein uS8 (131 aa).

This sequence belongs to the universal ribosomal protein uS8 family. In terms of assembly, part of the 30S ribosomal subunit. Contacts proteins S5 and S12.

In terms of biological role, one of the primary rRNA binding proteins, it binds directly to 16S rRNA central domain where it helps coordinate assembly of the platform of the 30S subunit. This chain is Small ribosomal subunit protein uS8, found in Azoarcus sp. (strain BH72).